The sequence spans 182 residues: Small ribosomal subunit protein uS4c (182 aa).

The S4 RNA-binding domain maps to 82–143 (MRLDNILFRL…KQRSKALIQN (62 aa)).

It belongs to the universal ribosomal protein uS4 family. Part of the 30S ribosomal subunit. Contacts protein S5. The interaction surface between S4 and S5 is involved in control of translational fidelity.

It localises to the plastid. Its subcellular location is the chloroplast. In terms of biological role, one of the primary rRNA binding proteins, it binds directly to 16S rRNA where it nucleates assembly of the body of the 30S subunit. Its function is as follows. With S5 and S12 plays an important role in translational accuracy. The sequence is that of Small ribosomal subunit protein uS4c (rps4) from Isophysis tasmanica.